The sequence spans 258 residues: Ribosomal RNA small subunit methyltransferase J (258 aa).

S-adenosyl-L-methionine-binding positions include 104–105, 120–121, and Asp175; these read RD and ER.

The protein belongs to the methyltransferase superfamily. RsmJ family.

The protein localises to the cytoplasm. It carries out the reaction guanosine(1516) in 16S rRNA + S-adenosyl-L-methionine = N(2)-methylguanosine(1516) in 16S rRNA + S-adenosyl-L-homocysteine + H(+). Specifically methylates the guanosine in position 1516 of 16S rRNA. In Chromobacterium violaceum (strain ATCC 12472 / DSM 30191 / JCM 1249 / CCUG 213 / NBRC 12614 / NCIMB 9131 / NCTC 9757 / MK), this protein is Ribosomal RNA small subunit methyltransferase J.